We begin with the raw amino-acid sequence, 117 residues long: Toxin CSTX-8 (117 aa).

Positions 1 to 20 (MKVLVICAVLFLAIFSNSSA) are cleaved as a signal peptide. The propeptide occupies 21–47 (ETEDDFLEDESFQADDVIPFLASEQVR). Intrachain disulfides connect Cys-50/Cys-65, Cys-57/Cys-74, Cys-64/Cys-95, and Cys-76/Cys-93. Residues 82-87 (RSETDR) constitute a propeptide that is removed on maturation. Thr-116 carries the threonine amide modification.

This sequence belongs to the neurotoxin 19 (CSTX) family. 12 subfamily. Heterodimer of A and B chains; disulfide-linked. Interacts with CSTX-1 (AC P81694), and with CSTX-9 (AC P58604). Expressed by the venom gland.

Its subcellular location is the secreted. It is found in the target cell membrane. In terms of biological role, synergistic toxin that induces or increases a cytolytic effect when combined with CSTX-1 (AC P81694) or CSTX-9 (AC P58604). When alone, has a weak insecticidal activity, with an unknown molecular target. The sequence is that of Toxin CSTX-8 from Cupiennius salei (American wandering spider).